The chain runs to 556 residues: (S)-N-methylcanadine 1-hydroxylase CYP82Y1 (556 aa).

The chain crosses the membrane as a helical span at residues 18–38; it reads TAVGTLILAFLLTLSPVIIYY. Cys-500 provides a ligand contact to heme.

Belongs to the cytochrome P450 family. Heme is required as a cofactor. As to expression, highly expressed in capsules. Expressed is stems.

The protein resides in the membrane. It catalyses the reaction (S)-cis-N-methylcanadine + reduced [NADPH--hemoprotein reductase] + O2 = (S)-1-hydroxy-N-methylcanadine + oxidized [NADPH--hemoprotein reductase] + H2O + H(+). It participates in alkaloid biosynthesis. In terms of biological role, cytochrome P450 involved in the biosynthesis of the benzylisoquinoline alkaloid noscapine. Converts (S)-N-methylcanadine to (S)-1-hydroxy-N-methylcanadine. This chain is (S)-N-methylcanadine 1-hydroxylase CYP82Y1, found in Papaver somniferum (Opium poppy).